Reading from the N-terminus, the 148-residue chain is MLIDADSCPVKTEIYRVMNRYQLKTFVVANRFFPLPDEALLERVVVSDKFDSADDWIVEHVQEASIVITSDIPLAARVVRAGGVCLSPTGRTFDASSIGHVLALRNLMNDLRGQGKVISSPRPFCCKDRSAFLSALDLAVQRLKRCGY.

Belongs to the UPF0178 family.

This Bartonella henselae (strain ATCC 49882 / DSM 28221 / CCUG 30454 / Houston 1) (Rochalimaea henselae) protein is UPF0178 protein BH16190.